The chain runs to 147 residues: Basic phospholipase A2 beta-bungarotoxin A4 chain (147 aa).

A signal peptide spans 1–19 (MNPAHLLVLSAVCVSLLGA). The propeptide occupies 20-27 (ANIPPHPL). 6 disulfides stabilise this stretch: C54–C146, C56–C72, C71–C127, C78–C120, C88–C113, and C106–C118. 3 residues coordinate Ca(2+): Y55, G57, and G59. H75 is an active-site residue. Residue D76 participates in Ca(2+) binding. D121 is a catalytic residue.

This sequence belongs to the phospholipase A2 family. Group I subfamily. D49 sub-subfamily. As to quaternary structure, heterodimer; disulfide-linked. The A chain has phospholipase A2 activity and the B chain shows homology with the basic protease inhibitors. Ca(2+) serves as cofactor. Expressed by the venom gland.

It localises to the secreted. The catalysed reaction is a 1,2-diacyl-sn-glycero-3-phosphocholine + H2O = a 1-acyl-sn-glycero-3-phosphocholine + a fatty acid + H(+). Functionally, snake venom phospholipase A2 (PLA2) that shows presynaptic neurotoxicity. The A chain has phospholipase activity. PLA2 catalyzes the calcium-dependent hydrolysis of the 2-acyl groups in 3-sn-phosphoglycerides. This chain is Basic phospholipase A2 beta-bungarotoxin A4 chain, found in Bungarus candidus (Malayan krait).